Here is a 249-residue protein sequence, read N- to C-terminus: Coproheme decarboxylase (249 aa).

Residues Arg131, 145-149, His172, and Gln185 each bind Fe-coproporphyrin III; that span reads YPMDK. The active site involves Tyr145.

Belongs to the ChdC family. Type 1 subfamily. Fe-coproporphyrin III is required as a cofactor.

It catalyses the reaction Fe-coproporphyrin III + 2 H2O2 + 2 H(+) = heme b + 2 CO2 + 4 H2O. The catalysed reaction is Fe-coproporphyrin III + H2O2 + H(+) = harderoheme III + CO2 + 2 H2O. The enzyme catalyses harderoheme III + H2O2 + H(+) = heme b + CO2 + 2 H2O. The protein operates within porphyrin-containing compound metabolism; protoheme biosynthesis. Its function is as follows. Involved in coproporphyrin-dependent heme b biosynthesis. Catalyzes the decarboxylation of Fe-coproporphyrin III (coproheme) to heme b (protoheme IX), the last step of the pathway. The reaction occurs in a stepwise manner with a three-propionate intermediate. In Staphylococcus epidermidis (strain ATCC 35984 / DSM 28319 / BCRC 17069 / CCUG 31568 / BM 3577 / RP62A), this protein is Coproheme decarboxylase.